A 417-amino-acid polypeptide reads, in one-letter code: Cobalamin binding intrinsic factor (417 aa).

A signal peptide spans 1–18; the sequence is MAWLSFYLLNVLWAVAGT. 3 disulfides stabilise this stretch: Cys26-Cys246, Cys103-Cys288, and Cys143-Cys182. Residue Asp171 coordinates cob(II)alamin. A Phosphoserine modification is found at Ser191. Residue Asn209 is glycosylated (N-linked (GlcNAc...) asparagine). 2 residues coordinate cob(II)alamin: Asp222 and Gln270. N-linked (GlcNAc...) asparagine glycosylation is found at Asn311 and Asn330. Cob(II)alamin is bound by residues 365–370 and 386–395; these read SWGLIV and WEFLSGKTPL. N-linked (GlcNAc...) asparagine glycosylation occurs at Asn413.

Belongs to the eukaryotic cobalamin transport proteins family. Interacts with CUBN (via CUB domains). Post-translationally, the N-terminus is blocked. As to expression, gastric mucosa.

It localises to the secreted. Promotes absorption of the essential vitamin cobalamin (Cbl) in the ileum. After interaction with CUBN, the CBLIF-cobalamin complex is internalized via receptor-mediated endocytosis. The protein is Cobalamin binding intrinsic factor of Rattus norvegicus (Rat).